Consider the following 291-residue polypeptide: Phosphate import ATP-binding protein PstB (291 aa).

The region spanning 43–286 (ANVKDLSFWY…PKHAMTEEYI (244 aa)) is the ABC transporter domain. 75–82 (GASGCGKS) is a binding site for ATP.

The protein belongs to the ABC transporter superfamily. Phosphate importer (TC 3.A.1.7) family. The complex is composed of two ATP-binding proteins (PstB), two transmembrane proteins (PstC and PstA) and a solute-binding protein (PstS).

The protein localises to the cell inner membrane. It carries out the reaction phosphate(out) + ATP + H2O = ADP + 2 phosphate(in) + H(+). Functionally, part of the ABC transporter complex PstSACB involved in phosphate import. Responsible for energy coupling to the transport system. The sequence is that of Phosphate import ATP-binding protein PstB from Alcaligenes faecalis.